The primary structure comprises 154 residues: MKLNELGNCKGATRNRKRVGRGIGSGTGKTSGRGVKGQKSRSGVSLNGFEGGQMPIYRRLPKRGFRNFFAKNYNEVSLGRIQLAVDTGKLDIGKPVDIIVLKEAGIIRRLKDGVRLLSDGELKAKITFNVSYTSKAARIKIEKAGGRVIVPEAV.

The segment at 1-44 is disordered; it reads MKLNELGNCKGATRNRKRVGRGIGSGTGKTSGRGVKGQKSRSGV. Residues 21 to 35 show a composition bias toward gly residues; it reads RGIGSGTGKTSGRGV.

This sequence belongs to the universal ribosomal protein uL15 family. In terms of assembly, part of the 50S ribosomal subunit.

Binds to the 23S rRNA. This Bartonella quintana (strain Toulouse) (Rochalimaea quintana) protein is Large ribosomal subunit protein uL15.